A 342-amino-acid polypeptide reads, in one-letter code: Trans-3-hydroxy-L-proline dehydratase (342 aa).

Serine 90 functions as the Proton acceptor in the catalytic mechanism. Residues 91 to 92 (GS), aspartate 252, and 257 to 258 (GT) each bind substrate.

This sequence belongs to the proline racemase family.

The enzyme catalyses trans-3-hydroxy-L-proline = 1-pyrroline-2-carboxylate + H2O. It catalyses the reaction trans-4-hydroxy-L-proline = cis-4-hydroxy-D-proline. Catalyzes the dehydration of trans-3-hydroxy-L-proline (t3LHyp) to Delta(1)-pyrroline-2-carboxylate (Pyr2C). Can also catalyze the epimerization of trans-4-hydroxy-L-proline (t4LHyp) to cis-4-hydroxy-D-proline (c4DHyp), albeit with 30-fold lower efficiency. Is likely involved in both degradation pathways that convert t3LHyp to L-proline and t4LHyp to alpha-ketoglutarate, which would allow A.tumefaciens to grow on t3LHyp or t4LHyp as a sole carbon source. Displays no proline racemase activity. This chain is Trans-3-hydroxy-L-proline dehydratase, found in Agrobacterium fabrum (strain C58 / ATCC 33970) (Agrobacterium tumefaciens (strain C58)).